Reading from the N-terminus, the 261-residue chain is Cytochrome c oxidase subunit 3 (261 aa).

At 1 to 15 the chain is on the mitochondrial matrix side; that stretch reads MTHQTHAYHMVNPSP. A helical transmembrane segment spans residues 16–34; that stretch reads WPLTGAMSALLLTSGLIMW. The Mitochondrial intermembrane portion of the chain corresponds to 35–40; it reads FHFNSY. Residues 41-66 form a helical membrane-spanning segment; sequence TLLLLGLLTNLISSYQWWRDIVREGT. At 67–72 the chain is on the mitochondrial matrix side; it reads YQGHHT. The helical transmembrane segment at 73-105 threads the bilayer; sequence KIVQKGLRYGMILFIISEVFFFLGFFWAFYHSS. The Mitochondrial intermembrane portion of the chain corresponds to 106–128; that stretch reads LAPTPELGGCWPPTGISPLNPLE. The chain crosses the membrane as a helical span at residues 129–152; the sequence is VPLLNTSILLASGVSITWAHHSLM. At 153-155 the chain is on the mitochondrial matrix side; the sequence is EGN. A helical membrane pass occupies residues 156–183; it reads RKQMLQALTITIALGLYFTALQAMEYYE. Residues 184 to 190 are Mitochondrial intermembrane-facing; it reads ASFTISD. Residues 191–223 traverse the membrane as a helical segment; the sequence is GVYGSTFFVATGFHGLHVIIGTTFLITCLVRQT. Residues 224 to 232 are Mitochondrial matrix-facing; it reads LYHFTSNHH. Residues 233–256 form a helical membrane-spanning segment; that stretch reads FGFEAAAWYWHFVDVVWLFLYVSI. Residues 257-261 lie on the Mitochondrial intermembrane side of the membrane; sequence YWWGS.

The protein belongs to the cytochrome c oxidase subunit 3 family. Component of the cytochrome c oxidase (complex IV, CIV), a multisubunit enzyme composed of 14 subunits. The complex is composed of a catalytic core of 3 subunits MT-CO1, MT-CO2 and MT-CO3, encoded in the mitochondrial DNA, and 11 supernumerary subunits COX4I, COX5A, COX5B, COX6A, COX6B, COX6C, COX7A, COX7B, COX7C, COX8 and NDUFA4, which are encoded in the nuclear genome. The complex exists as a monomer or a dimer and forms supercomplexes (SCs) in the inner mitochondrial membrane with NADH-ubiquinone oxidoreductase (complex I, CI) and ubiquinol-cytochrome c oxidoreductase (cytochrome b-c1 complex, complex III, CIII), resulting in different assemblies (supercomplex SCI(1)III(2)IV(1) and megacomplex MCI(2)III(2)IV(2)).

It localises to the mitochondrion inner membrane. It carries out the reaction 4 Fe(II)-[cytochrome c] + O2 + 8 H(+)(in) = 4 Fe(III)-[cytochrome c] + 2 H2O + 4 H(+)(out). Its function is as follows. Component of the cytochrome c oxidase, the last enzyme in the mitochondrial electron transport chain which drives oxidative phosphorylation. The respiratory chain contains 3 multisubunit complexes succinate dehydrogenase (complex II, CII), ubiquinol-cytochrome c oxidoreductase (cytochrome b-c1 complex, complex III, CIII) and cytochrome c oxidase (complex IV, CIV), that cooperate to transfer electrons derived from NADH and succinate to molecular oxygen, creating an electrochemical gradient over the inner membrane that drives transmembrane transport and the ATP synthase. Cytochrome c oxidase is the component of the respiratory chain that catalyzes the reduction of oxygen to water. Electrons originating from reduced cytochrome c in the intermembrane space (IMS) are transferred via the dinuclear copper A center (CU(A)) of subunit 2 and heme A of subunit 1 to the active site in subunit 1, a binuclear center (BNC) formed by heme A3 and copper B (CU(B)). The BNC reduces molecular oxygen to 2 water molecules using 4 electrons from cytochrome c in the IMS and 4 protons from the mitochondrial matrix. This is Cytochrome c oxidase subunit 3 (MT-CO3) from Ornithorhynchus anatinus (Duckbill platypus).